The following is a 642-amino-acid chain: tRNA uridine 5-carboxymethylaminomethyl modification enzyme MnmG (642 aa).

Residues 10–15, Val122, and Ser177 each bind FAD; that span reads GAGHAG. Position 269–283 (269–283) interacts with NAD(+); that stretch reads SARYCPSLEDKVMRF. Residue Gln366 participates in FAD binding.

Belongs to the MnmG family. As to quaternary structure, homodimer. Heterotetramer of two MnmE and two MnmG subunits. The cofactor is FAD.

The protein localises to the cytoplasm. NAD-binding protein involved in the addition of a carboxymethylaminomethyl (cmnm) group at the wobble position (U34) of certain tRNAs, forming tRNA-cmnm(5)s(2)U34. This Syntrophobacter fumaroxidans (strain DSM 10017 / MPOB) protein is tRNA uridine 5-carboxymethylaminomethyl modification enzyme MnmG.